A 169-amino-acid chain; its full sequence is Large ribosomal subunit protein uL10 (169 aa).

It belongs to the universal ribosomal protein uL10 family. Part of the 50S ribosomal subunit.

In Deinococcus radiodurans (strain ATCC 13939 / DSM 20539 / JCM 16871 / CCUG 27074 / LMG 4051 / NBRC 15346 / NCIMB 9279 / VKM B-1422 / R1), this protein is Large ribosomal subunit protein uL10 (rplJ).